A 545-amino-acid polypeptide reads, in one-letter code: Cytosolic Fe-S cluster assembly factor NAR1 (545 aa).

C20, C74, C77, C80, C188, C243, C454, and C458 together coordinate [4Fe-4S] cluster.

It belongs to the NARF family.

Functionally, component of the cytosolic Fe/S protein assembly machinery. Required for maturation of extramitochondrial Fe/S proteins. May play a role in the transfer of pre-assembled Fe/S clusters to target apoproteins. The sequence is that of Cytosolic Fe-S cluster assembly factor NAR1 (NAR1) from Scheffersomyces stipitis (strain ATCC 58785 / CBS 6054 / NBRC 10063 / NRRL Y-11545) (Yeast).